The sequence spans 229 residues: Triosephosphate isomerase (229 aa).

16 to 18 (NFK) provides a ligand contact to substrate. Catalysis depends on histidine 100, which acts as the Electrophile. Glutamate 148 serves as the catalytic Proton acceptor. Substrate-binding positions include isoleucine 153, glycine 188, and 209–210 (AS).

This sequence belongs to the triosephosphate isomerase family. As to quaternary structure, homotetramer; dimer of dimers.

It is found in the cytoplasm. The catalysed reaction is D-glyceraldehyde 3-phosphate = dihydroxyacetone phosphate. It functions in the pathway carbohydrate biosynthesis; gluconeogenesis. Its pathway is carbohydrate degradation; glycolysis; D-glyceraldehyde 3-phosphate from glycerone phosphate: step 1/1. Involved in the gluconeogenesis. Catalyzes stereospecifically the conversion of dihydroxyacetone phosphate (DHAP) to D-glyceraldehyde-3-phosphate (G3P). The protein is Triosephosphate isomerase of Methanothermobacter thermautotrophicus (strain ATCC 29096 / DSM 1053 / JCM 10044 / NBRC 100330 / Delta H) (Methanobacterium thermoautotrophicum).